Reading from the N-terminus, the 341-residue chain is Major histocompatibility complex class I-related protein 1 (341 aa).

Residues 1–22 (MGELMAFLLPLIIVLMVKHSDS) form the signal peptide. The segment at 23 to 109 (RTHSLRYFRL…KRLQRHYNHS (87 aa)) is alpha-1. Residues 23 to 201 (RTHSLRYFRL…EYGKDILQRT (179 aa)) are antigen-binding cleft. At 23–302 (RTHSLRYFRL…QESETIPLVM (280 aa)) the chain is on the extracellular side. 8-(9H-purin-6-yl)-2-oxa-8-azabicyclo[3.3.1]nona-3,6-diene-4,6-dicarbaldehyde contacts are provided by Tyr-29 and Arg-31. Arg-31, Ser-46, and Lys-65 together coordinate 5-(2-oxoethylideneamino)-6-(D-ribitylamino)uracil. 5-(2-oxopropylideneamino)-6-(D-ribitylamino)uracil-binding residues include Arg-31, Ser-46, and Lys-65. 7-hydroxy-6-methyl-8-(1-D-ribityl)lumazine contacts are provided by Arg-31, Ser-46, and Lys-65. Residues Lys-65 and His-80 each contribute to the 8-(9H-purin-6-yl)-2-oxa-8-azabicyclo[3.3.1]nona-3,6-diene-4,6-dicarbaldehyde site. Residue Lys-65 participates in 2-amino-4-oxopteridine-6-carbaldehyde binding. Lys-65 serves as a coordination point for pyridoxal. N-linked (GlcNAc...) asparagine glycosylation is present at Asn-107. An alpha-2 region spans residues 110 to 201 (GSHTYQRMIG…EYGKDILQRT (92 aa)). Arg-116 is an 8-(9H-purin-6-yl)-2-oxa-8-azabicyclo[3.3.1]nona-3,6-diene-4,6-dicarbaldehyde binding site. Residues Arg-116, Tyr-174, and Gln-175 each coordinate 5-(2-oxoethylideneamino)-6-(D-ribitylamino)uracil. 3 residues coordinate 5-(2-oxopropylideneamino)-6-(D-ribitylamino)uracil: Arg-116, Tyr-174, and Gln-175. Arg-116, Tyr-174, and Gln-175 together coordinate 7-hydroxy-6-methyl-8-(1-D-ribityl)lumazine. 2 disulfide bridges follow: Cys-120/Cys-183 and Cys-222/Cys-278. The tract at residues 202-293 (EPPLVRVNRK…GVHMVLQVPQ (92 aa)) is alpha-3. The Ig-like C1-type domain maps to 203 to 299 (PPLVRVNRKE…QVPQESETIP (97 aa)). Residues 294-302 (ESETIPLVM) form a connecting peptide region. Residues 303 to 323 (KAVSGSIVLVIVLAGVGVLVW) form a helical membrane-spanning segment. Over 324 to 341 (RRRPREQNGAIYLPTPDR) the chain is Cytoplasmic.

Belongs to the MHC class I family. Heterotrimer that consists of MR1, B2M and metabolite antigen. Major classes of metabolite ligands presented by MR1 include riboflavin-related antigens, pyrimidines and ribityl lumazines, nucleobase adducts and folate derivatives. Forms reversible covalent Schiff base complexes with microbial pyrimidine-based metabolite, which serves as a molecular switch triggering complete folding, stable association with B2M and translocation of the ternary complex from endoplasmic reticulum to the plasma membrane. Alternatively, forms non-Schiff base complexes with ribityl lumazines. On antigen-presenting cells, the ternary complex interacts with TCR on MR1-restricted T cells. Interacts with TAPBP and TAPBPL chaperones in the endoplasmic reticulum. TAPBP associated or not with MHC class I peptide loading complex binds ligand-free MR1 or MR1-B2M complex, providing for stable MR1 pools ready for metabolite antigen processing. TAPBPL interacts with MR1 in a ligand-independent way; this interaction may stabilize MR1 pool and facilitate ligand loading and dissociation. Structurally, MR1-B2M heterodimer adopts a topology similar to classical MHC class I molecules, with alpha-1 and alpha-2 domains of MR1 forming the antigen-binding cleft composed of two alpha-helices resting on a floor of 7-stranded anti-parallel beta-pleated sheet. MR1-B2M heterodimer (via alpha-helices) interacts with TCR (via CDR domains). In terms of processing, N-glycosylated.

The protein resides in the cell membrane. Its subcellular location is the endoplasmic reticulum membrane. It is found in the golgi apparatus membrane. It localises to the early endosome membrane. The protein localises to the late endosome membrane. Antigen-presenting molecule specialized in displaying microbial pyrimidine-based metabolites to alpha-beta T cell receptors (TCR) on innate-type mucosal-associated invariant T (MAIT) cells. In complex with B2M preferentially presents riboflavin-derived metabolites to semi-invariant TCRs on MAIT cells, guiding immune surveillance of the microbial metabolome at mucosal epithelial barriers. Signature pyrimidine-based microbial antigens are generated via non-enzymatic condensation of metabolite intermediates of the riboflavin pathway with by-products arising from other metabolic pathways such as glycolysis. Typical potent antigenic metabolites are 5-(2-oxoethylideneamino)-6-D-ribitylaminouracil (5-OE-RU) and 5-(2-oxopropylideneamino)-6-D-ribitylaminouracil (5-OP-RU), products of condensation of 5-amino-6-D-ribityaminouracil (5-A-RU) with glyoxal or methylglyoxal by-products, respectively. May present microbial antigens to various MAIT cell subsets, providing for unique recognition of diverse microbes, including pathogens that do not synthesize riboflavin. Upon antigen recognition, elicits rapid innate-type MAIT cell activation to eliminate pathogenic microbes by directly killing infected cells. During T cell development, drives thymic selection and post-thymic terminal differentiation of MAIT cells in a process dependent on commensal microflora. Acts as an immune sensor of cancer cell metabolome. May present a tumor-specific or -associated metabolite essential for cancer cell survival to a pan-cancer TCR on a non-MAIT CD8-positive T cell clone, triggering T cell-mediated killing of a wide range of cancer cell types. May present tumor-enriched pyridoxal and pyridoxal 5'-phosphate antigens, enabling preferential recognition of cancer cells. Presents nucleobase carbonyl adducts generated during oxidative stress. Captures M3Ade, a nucleobase adduct composed of one adenine modified by a malondialdehyde trimer, for recognition by MR1-restricted T cell clones expressing a polyclonal TCR repertoire. This is Major histocompatibility complex class I-related protein 1 from Pan troglodytes (Chimpanzee).